A 38-amino-acid chain; its full sequence is Large ribosomal subunit protein bL36 (38 aa).

The protein belongs to the bacterial ribosomal protein bL36 family.

The protein is Large ribosomal subunit protein bL36 of Chlorobium phaeobacteroides (strain BS1).